Consider the following 526-residue polypeptide: Osmo-independent choline transporter BetT1 (526 aa).

Residues 1-17 lie on the Cytoplasmic side of the membrane; sequence MWSKRDEQKTYPPIRLN. Residues 18–38 traverse the membrane as a helical segment; sequence PFVFWSSAISISIFGMLFVLF. Residues 39–56 are Periplasmic-facing; sequence PETSQHGLTWIQQQVNQL. The helical transmembrane segment at 57–77 threads the bilayer; that stretch reads FGWYYMLVIILSLGFVAWLAF. Residues 78–93 lie on the Cytoplasmic side of the membrane; sequence SQVGNIPLGKAQDKPE. A helical transmembrane segment spans residues 94–114; the sequence is FGYLVWTSMLFSAGIGIALLY. Topologically, residues 115 to 148 are periplasmic; sequence YGVAEPVDHFLRPPEGQGGTVEAAQNAMMYSFLH. A helical membrane pass occupies residues 149–169; the sequence is WGIHGWVLYALVGVTLGYFAF. The Cytoplasmic segment spans residues 170–200; the sequence is RRDLPLALRSALYPIFGERIHGLVGHMVDGF. The chain crosses the membrane as a helical span at residues 201–221; it reads GILATIISLVTNLGIGALVMI. Topologically, residues 222–236 are periplasmic; sequence SGISYLFPDLPNTSS. A helical membrane pass occupies residues 237–257; that stretch reads TLVVTVIMMMLVATLTTVIGI. Residues 258–272 lie on the Cytoplasmic side of the membrane; sequence EKGLAWLSRINLRLL. The chain crosses the membrane as a helical span at residues 273 to 293; the sequence is YLLLLFVFLTGPTNHLLNGLV. The Periplasmic portion of the chain corresponds to 294 to 323; sequence QNTGDYLSHFVQKSFDLYLYDKNATGWLAS. A helical transmembrane segment spans residues 324–344; that stretch reads WTIFYWAWWIAWAPFVGMFIA. Over 345-354 the chain is Cytoplasmic; it reads RISKGRTIRE. The helical transmembrane segment at 355–375 threads the bilayer; the sequence is VVLGVCLIPLGFTLAWISIFG. Over 376–417 the chain is Periplasmic; it reads NTAIDLILNHGQQIIGSLVIQDPALSLFKLLEYLPFHPYVAG. The helical transmembrane segment at 418 to 438 threads the bilayer; that stretch reads IVVVICFVLFLTPVGSGTLMI. The Cytoplasmic portion of the chain corresponds to 439 to 457; it reads ANLSSQGGSSDSDSPIWLR. The chain crosses the membrane as a helical span at residues 458–478; sequence VFWSIAITIVSIGLLLAGSFS. The Periplasmic portion of the chain corresponds to 479-482; the sequence is AMQS. The helical transmembrane segment at 483–503 threads the bilayer; sequence AVVLCGLPFSVILLLYMFGLA. Residues 504–526 lie on the Cytoplasmic side of the membrane; sequence KALKQETQQPVVESHTTETSGSD.

The protein belongs to the BCCT transporter (TC 2.A.15) family.

It is found in the cell inner membrane. Sodium-independent high-affinity choline uptake system. Uptake is not proton coupled. May play a role in metabolic adaptation to choline-containing environments. This chain is Osmo-independent choline transporter BetT1, found in Acinetobacter baylyi (strain ATCC 33305 / BD413 / ADP1).